The following is a 192-amino-acid chain: Ethylene-responsive transcription factor ERF027 (192 aa).

A DNA-binding region (AP2/ERF) is located at residues 18–74; sequence VYRGIRCRSGKWVSEIREPRKTTRIWLGTYPMAEMAAAAYDVAAMALKGREAVLNFP. Disordered regions lie at residues 104 to 132 and 167 to 192; these read CEEGEEEKKAKEKKSSSSKSRARECHVDN and APPSWMGSRPSDDSPENSNDEDLWGY. The span at 179–192 shows a compositional bias: acidic residues; sequence DSPENSNDEDLWGY.

It belongs to the AP2/ERF transcription factor family. ERF subfamily.

The protein localises to the nucleus. Its function is as follows. Probably acts as a transcriptional activator. Binds to the GCC-box pathogenesis-related promoter element. May be involved in the regulation of gene expression by stress factors and by components of stress signal transduction pathways. This chain is Ethylene-responsive transcription factor ERF027 (ERF027), found in Arabidopsis thaliana (Mouse-ear cress).